The following is a 466-amino-acid chain: Ribosome biogenesis protein YTM1 (466 aa).

The segment at 8–95 (IKINFFTNEE…EASLNLEYTR (88 aa)) is ubiquitin-like (UBL) domain. The interval 105-466 (SFNNDDWISS…QINKGSDITK (362 aa)) is sufficient for interaction with ERB1 and association with 66S pre-ribosomes. WD repeat units lie at residues 120–159 (PLSA…EKQY), 161–199 (GHSG…NIED), 214–253 (GHKA…MTTI), 291–331 (GHSQ…CVDT), 333–372 (TTGY…TTTE), 381–421 (GHTN…SLYT), and 431–466 (KGQD…DITK).

Belongs to the WD repeat WDR12/YTM1 family. Component of the NOP7 complex, composed of ERB1, NOP7 and YTM1. The complex is held together by ERB1, which interacts with NOP7 via its N-terminal domain and with YTM1 via a high-affinity interaction between the seven-bladed beta-propeller domains of the 2 proteins. The NOP7 complex associates with the 66S pre-ribosome. Interacts (via UBL domain) with MDN1 (via VWFA/MIDAS domain).

Its subcellular location is the nucleus. The protein resides in the nucleolus. It is found in the nucleoplasm. Component of the NOP7 complex, which is required for maturation of the 25S and 5.8S ribosomal RNAs and formation of the 60S ribosome. The sequence is that of Ribosome biogenesis protein YTM1 from Debaryomyces hansenii (strain ATCC 36239 / CBS 767 / BCRC 21394 / JCM 1990 / NBRC 0083 / IGC 2968) (Yeast).